Consider the following 369-residue polypeptide: DNA replication and repair protein RecF (369 aa).

ATP is bound at residue 30–37 (GPNGSGKT).

The protein belongs to the RecF family.

It is found in the cytoplasm. In terms of biological role, the RecF protein is involved in DNA metabolism; it is required for DNA replication and normal SOS inducibility. RecF binds preferentially to single-stranded, linear DNA. It also seems to bind ATP. The protein is DNA replication and repair protein RecF of Chlorobium luteolum (strain DSM 273 / BCRC 81028 / 2530) (Pelodictyon luteolum).